A 124-amino-acid polypeptide reads, in one-letter code: Small ribosomal subunit protein uS11 (124 aa).

A disordered region spans residues 102–124 (RIGRIEDATPIPHDGTTPKRKNR).

The protein belongs to the universal ribosomal protein uS11 family. As to quaternary structure, part of the 30S ribosomal subunit.

Functionally, located on the platform of the 30S subunit. This chain is Small ribosomal subunit protein uS11, found in Methanococcus maripaludis (strain C5 / ATCC BAA-1333).